Consider the following 403-residue polypeptide: L-alanine/L-glutamate racemase (403 aa).

Pyridoxal 5'-phosphate-binding positions include Y62 to N64, G92 to L93, and A209 to T211. Residue K212 is modified to N6-(pyridoxal phosphate)lysine.

Belongs to the trans-sulfuration enzymes family. As to quaternary structure, homotetramer; dimer of active dimers. Pyridoxal 5'-phosphate serves as cofactor.

The catalysed reaction is L-alanine = D-alanine. The enzyme catalyses L-glutamate = D-glutamate. It catalyses the reaction L,L-cystathionine + H2O = L-homocysteine + pyruvate + NH4(+). The protein operates within cell wall biogenesis; peptidoglycan biosynthesis. Its function is as follows. Catalyzes the racemization of L-alanine to D-alanine, and of L-glutamate to D-glutamate. The activity is low, but likely physiological since W.pipientis wMel lacks canonical alr and murI genes, while D-alanine and D-glutamate are essential components of peptidoglycan. Also displays a vestigial cystathionine beta-lyase (CBL) activity, cleaving cystathionine to homocysteine and pyruvate; however, this reaction seems not to be physiologically relevant since the only met gene in the genome of this obligately intracellular parasitic bacterium is metC, demonstrating that it is a methionine auxotroph. The sequence is that of L-alanine/L-glutamate racemase from Wolbachia pipientis wMel.